We begin with the raw amino-acid sequence, 571 residues long: Proline--tRNA ligase (571 aa).

Belongs to the class-II aminoacyl-tRNA synthetase family. ProS type 1 subfamily. As to quaternary structure, homodimer.

The protein localises to the cytoplasm. The enzyme catalyses tRNA(Pro) + L-proline + ATP = L-prolyl-tRNA(Pro) + AMP + diphosphate. Its function is as follows. Catalyzes the attachment of proline to tRNA(Pro) in a two-step reaction: proline is first activated by ATP to form Pro-AMP and then transferred to the acceptor end of tRNA(Pro). As ProRS can inadvertently accommodate and process non-cognate amino acids such as alanine and cysteine, to avoid such errors it has two additional distinct editing activities against alanine. One activity is designated as 'pretransfer' editing and involves the tRNA(Pro)-independent hydrolysis of activated Ala-AMP. The other activity is designated 'posttransfer' editing and involves deacylation of mischarged Ala-tRNA(Pro). The misacylated Cys-tRNA(Pro) is not edited by ProRS. The chain is Proline--tRNA ligase from Vibrio vulnificus (strain CMCP6).